Here is a 203-residue protein sequence, read N- to C-terminus: Superoxide dismutase [Mn] (203 aa).

Mn(2+)-binding residues include His27, His81, Asp164, and His168.

Belongs to the iron/manganese superoxide dismutase family. Homodimer. It depends on Mn(2+) as a cofactor.

It carries out the reaction 2 superoxide + 2 H(+) = H2O2 + O2. Destroys superoxide anion radicals which are normally produced within the cells and which are toxic to biological systems. This is Superoxide dismutase [Mn] (sodA) from Pseudomonas putida (Arthrobacter siderocapsulatus).